Reading from the N-terminus, the 313-residue chain is Fructose-1,6-bisphosphatase class 1 (313 aa).

Residues Glu-91, Asp-112, Leu-114, and Asp-115 each contribute to the Mg(2+) site. Substrate is bound by residues 115–118 (DGSS), Tyr-223, and Lys-254. Glu-260 is a binding site for Mg(2+).

The protein belongs to the FBPase class 1 family. In terms of assembly, homotetramer. Mg(2+) serves as cofactor.

The protein localises to the cytoplasm. It catalyses the reaction beta-D-fructose 1,6-bisphosphate + H2O = beta-D-fructose 6-phosphate + phosphate. It participates in carbohydrate biosynthesis; gluconeogenesis. The polypeptide is Fructose-1,6-bisphosphatase class 1 (Geobacter sulfurreducens (strain ATCC 51573 / DSM 12127 / PCA)).